A 185-amino-acid chain; its full sequence is Ribosome-recycling factor (185 aa).

The protein belongs to the RRF family.

The protein localises to the cytoplasm. Responsible for the release of ribosomes from messenger RNA at the termination of protein biosynthesis. May increase the efficiency of translation by recycling ribosomes from one round of translation to another. This Thermosipho africanus (strain TCF52B) protein is Ribosome-recycling factor.